The following is a 142-amino-acid chain: uncharacterized protein (142 aa).

The next 2 helical transmembrane spans lie at 75–97 (VFFR…YIVA) and 107–124 (LSIV…KLFY).

It localises to the cell membrane. This is an uncharacterized protein from Archaeoglobus fulgidus (strain ATCC 49558 / DSM 4304 / JCM 9628 / NBRC 100126 / VC-16).